Here is a 441-residue protein sequence, read N- to C-terminus: Xaa-Pro dipeptidase (441 aa).

Positions 244, 255, 336, 381, and 420 each coordinate Mn(2+).

Belongs to the peptidase M24B family. Bacterial-type prolidase subfamily. Mn(2+) serves as cofactor.

The catalysed reaction is Xaa-L-Pro dipeptide + H2O = an L-alpha-amino acid + L-proline. Splits dipeptides with a prolyl residue in the C-terminal position. In Xanthomonas axonopodis pv. citri (strain 306), this protein is Xaa-Pro dipeptidase.